The primary structure comprises 1436 residues: Gag-Pol polyprotein (1436 aa).

Residue Gly2 is the site of N-myristoyl glycine; by host attachment. The segment at 7–31 (VLSGGKLDAWEKIRLRPGGKKKYRL) is interaction with Gp41. The tract at residues 8–43 (LSGGKLDAWEKIRLRPGGKKKYRLKHLVWASRELER) is interaction with host CALM1. An interaction with host AP3D1 region spans residues 12–19 (KLDAWEKI). Residues 14–33 (DAWEKIRLRPGGKKKYRLKH) form an interaction with membrane phosphatidylinositol 4,5-bisphosphate and RNA region. Residues 16-22 (WEKIRLR) carry the Nuclear export signal motif. The Nuclear localization signal motif lies at 26 to 32 (KKKYRLK). The interval 73 to 77 (EELRS) is interaction with membrane phosphatidylinositol 4,5-bisphosphate. Residues 102 to 129 (EKMEEEQNKSKNKKAQQAAADAGNNSQV) are disordered. Positions 116-128 (AQQAAADAGNNSQ) are enriched in low complexity. At Tyr133 the chain carries Phosphotyrosine; by host. Residues 190–228 (NTVGGHQAAMQMLKETINEEAAEWDRLHPVHAGPIAPGQ) are interaction with human PPIA/CYPA and NUP153. Residues 278 to 364 (YSPVSILDIR…GGPSHKARVL (87 aa)) are dimerization/Multimerization of capsid protein p24. CCHC-type zinc fingers lie at residues 392 to 409 (IKCF…NCRA) and 413 to 430 (KGCW…DCTE). The dimerization of protease stretch occupies residues 490–494 (PQITL). Residues 509 to 578 (KEALLDTGAD…TPVNIIGRNL (70 aa)) form the Peptidase A2 domain. Catalysis depends on Asp514, which acts as the For protease activity; shared with dimeric partner. Dimerization of protease stretches follow at residues 538-544 (GIGGFIK) and 577-589 (NLLT…LNFP). The 191-residue stretch at 632-822 (EGKISRVGPE…PPFLWMGYEL (191 aa)) folds into the Reverse transcriptase domain. Mg(2+)-binding residues include Asp698, Asp773, and Asp774. Residues 815-823 (FLWMGYELH) are RT 'primer grip'. The short motif at 986–1002 (WETWWVEYWQATWIPEW) is the Tryptophan repeat motif element. Residues 1022–1145 (IIGAETFYVD…VDKLVSQGIR (124 aa)) enclose the RNase H type-1 domain. Positions 1031, 1066, 1086, and 1137 each coordinate Mg(2+). The segment at 1151–1192 (DGIDKAQEEHEKYHNNWRAMASDFNLPPVVAKEIVASCDKCQ) adopts an Integrase-type zinc-finger fold. Zn(2+) contacts are provided by His1160, His1164, Cys1188, and Cys1191. One can recognise an Integrase catalytic domain in the interval 1202 to 1352 (VDCSPGIWQL…SAGERIIDII (151 aa)). Mg(2+) is bound by residues Asp1212, Asp1264, and Glu1300. The segment at residues 1371–1418 (FRVYYRDSRDPIWKGPAKLLWKGEGAVVIQDNSDIKVVPRRKVKIIRD) is a DNA-binding region (integrase-type).

As to quaternary structure, homotrimer; further assembles as hexamers of trimers. Interacts with gp41 (via C-terminus). Interacts with host CALM1; this interaction induces a conformational change in the Matrix protein, triggering exposure of the myristate group. Interacts with host AP3D1; this interaction allows the polyprotein trafficking to multivesicular bodies during virus assembly. Part of the pre-integration complex (PIC) which is composed of viral genome, matrix protein, Vpr and integrase. In terms of assembly, homodimer; the homodimer further multimerizes as homohexamers or homopentamers. Interacts with human PPIA/CYPA; This interaction stabilizes the capsid. Interacts with human NUP153. Interacts with host PDZD8; this interaction stabilizes the capsid. Interacts with monkey TRIM5; this interaction destabilizes the capsid. Homodimer, whose active site consists of two apposed aspartic acid residues. As to quaternary structure, heterodimer of p66 RT and p51 RT (RT p66/p51). Heterodimerization of RT is essential for DNA polymerase activity. The overall folding of the subdomains is similar in p66 RT and p51 RT but the spatial arrangements of the subdomains are dramatically different. In terms of assembly, homotetramer; may further associate as a homohexadecamer. Part of the pre-integration complex (PIC) which is composed of viral genome, matrix protein, Vpr and integrase. Interacts with human SMARCB1/INI1 and human PSIP1/LEDGF isoform 1. Interacts with human KPNA3; this interaction might play a role in nuclear import of the pre-integration complex. Interacts with human NUP153; this interaction might play a role in nuclear import of the pre-integration complex. It depends on Mg(2+) as a cofactor. Post-translationally, specific enzymatic cleavages by the viral protease yield mature proteins. The protease is released by autocatalytic cleavage. The polyprotein is cleaved during and after budding, this process is termed maturation. Proteolytic cleavage of p66 RT removes the RNase H domain to yield the p51 RT subunit. Nucleocapsid protein p7 might be further cleaved after virus entry. Tyrosine phosphorylated presumably in the virion by a host kinase. Phosphorylation is apparently not a major regulator of membrane association. In terms of processing, phosphorylated possibly by host MAPK1; this phosphorylation is necessary for Pin1-mediated virion uncoating. Post-translationally, methylated by host PRMT6, impairing its function by reducing RNA annealing and the initiation of reverse transcription.

The protein resides in the host cell membrane. It localises to the host endosome. It is found in the host multivesicular body. Its subcellular location is the virion membrane. The protein localises to the host nucleus. The protein resides in the host cytoplasm. It localises to the virion. The enzyme catalyses Specific for a P1 residue that is hydrophobic, and P1' variable, but often Pro.. It carries out the reaction Endohydrolysis of RNA in RNA/DNA hybrids. Three different cleavage modes: 1. sequence-specific internal cleavage of RNA. Human immunodeficiency virus type 1 and Moloney murine leukemia virus enzymes prefer to cleave the RNA strand one nucleotide away from the RNA-DNA junction. 2. RNA 5'-end directed cleavage 13-19 nucleotides from the RNA end. 3. DNA 3'-end directed cleavage 15-20 nucleotides away from the primer terminus.. The catalysed reaction is 3'-end directed exonucleolytic cleavage of viral RNA-DNA hybrid.. It catalyses the reaction DNA(n) + a 2'-deoxyribonucleoside 5'-triphosphate = DNA(n+1) + diphosphate. Protease: The viral protease is inhibited by many synthetic protease inhibitors (PIs), such as amprenavir, atazanavir, indinavir, loprinavir, nelfinavir, ritonavir and saquinavir. Use of protease inhibitors in tritherapy regimens permit more ambitious therapeutic strategies. Reverse transcriptase/ribonuclease H: RT can be inhibited either by nucleoside RT inhibitors (NRTIs) or by non nucleoside RT inhibitors (NNRTIs). NRTIs act as chain terminators, whereas NNRTIs inhibit DNA polymerization by binding a small hydrophobic pocket near the RT active site and inducing an allosteric change in this region. Classical NRTIs are abacavir, adefovir (PMEA), didanosine (ddI), lamivudine (3TC), stavudine (d4T), tenofovir (PMPA), zalcitabine (ddC), and zidovudine (AZT). Classical NNRTIs are atevirdine (BHAP U-87201E), delavirdine, efavirenz (DMP-266), emivirine (I-EBU), and nevirapine (BI-RG-587). The tritherapies used as a basic effective treatment of AIDS associate two NRTIs and one NNRTI. Mediates, with Gag polyprotein, the essential events in virion assembly, including binding the plasma membrane, making the protein-protein interactions necessary to create spherical particles, recruiting the viral Env proteins, and packaging the genomic RNA via direct interactions with the RNA packaging sequence (Psi). Gag-Pol polyprotein may regulate its own translation, by the binding genomic RNA in the 5'-UTR. At low concentration, the polyprotein would promote translation, whereas at high concentration, the polyprotein would encapsidate genomic RNA and then shut off translation. In terms of biological role, targets the polyprotein to the plasma membrane via a multipartite membrane-binding signal, that includes its myristoylated N-terminus. Matrix protein is part of the pre-integration complex. Implicated in the release from host cell mediated by Vpu. Binds to RNA. Its function is as follows. Forms the conical core that encapsulates the genomic RNA-nucleocapsid complex in the virion. Most core are conical, with only 7% tubular. The core is constituted by capsid protein hexamer subunits. The core is disassembled soon after virion entry. Host restriction factors such as TRIM5-alpha or TRIMCyp bind retroviral capsids and cause premature capsid disassembly, leading to blocks in reverse transcription. Capsid restriction by TRIM5 is one of the factors which restricts HIV-1 to the human species. Host PIN1 apparently facilitates the virion uncoating. On the other hand, interactions with PDZD8 or CYPA stabilize the capsid. Functionally, encapsulates and protects viral dimeric unspliced genomic RNA (gRNA). Binds these RNAs through its zinc fingers. Acts as a nucleic acid chaperone which is involved in rearangement of nucleic acid secondary structure during gRNA retrotranscription. Also facilitates template switch leading to recombination. As part of the polyprotein, participates in gRNA dimerization, packaging, tRNA incorporation and virion assembly. Aspartyl protease that mediates proteolytic cleavages of Gag and Gag-Pol polyproteins during or shortly after the release of the virion from the plasma membrane. Cleavages take place as an ordered, step-wise cascade to yield mature proteins. This process is called maturation. Displays maximal activity during the budding process just prior to particle release from the cell. Also cleaves Nef and Vif, probably concomitantly with viral structural proteins on maturation of virus particles. Hydrolyzes host EIF4GI and PABP1 in order to shut off the capped cellular mRNA translation. The resulting inhibition of cellular protein synthesis serves to ensure maximal viral gene expression and to evade host immune response. Also mediates cleavage of host YTHDF3. Mediates cleavage of host CARD8, thereby activating the CARD8 inflammasome, leading to the clearance of latent HIV-1 in patient CD4(+) T-cells after viral reactivation; in contrast, HIV-1 can evade CARD8-sensing when its protease remains inactive in infected cells prior to viral budding. In terms of biological role, multifunctional enzyme that converts the viral RNA genome into dsDNA in the cytoplasm, shortly after virus entry into the cell. This enzyme displays a DNA polymerase activity that can copy either DNA or RNA templates, and a ribonuclease H (RNase H) activity that cleaves the RNA strand of RNA-DNA heteroduplexes in a partially processive 3' to 5' endonucleasic mode. Conversion of viral genomic RNA into dsDNA requires many steps. A tRNA(3)-Lys binds to the primer-binding site (PBS) situated at the 5'-end of the viral RNA. RT uses the 3' end of the tRNA primer to perform a short round of RNA-dependent minus-strand DNA synthesis. The reading proceeds through the U5 region and ends after the repeated (R) region which is present at both ends of viral RNA. The portion of the RNA-DNA heteroduplex is digested by the RNase H, resulting in a ssDNA product attached to the tRNA primer. This ssDNA/tRNA hybridizes with the identical R region situated at the 3' end of viral RNA. This template exchange, known as minus-strand DNA strong stop transfer, can be either intra- or intermolecular. RT uses the 3' end of this newly synthesized short ssDNA to perform the RNA-dependent minus-strand DNA synthesis of the whole template. RNase H digests the RNA template except for two polypurine tracts (PPTs) situated at the 5'-end and near the center of the genome. It is not clear if both polymerase and RNase H activities are simultaneous. RNase H probably can proceed both in a polymerase-dependent (RNA cut into small fragments by the same RT performing DNA synthesis) and a polymerase-independent mode (cleavage of remaining RNA fragments by free RTs). Secondly, RT performs DNA-directed plus-strand DNA synthesis using the PPTs that have not been removed by RNase H as primers. PPTs and tRNA primers are then removed by RNase H. The 3' and 5' ssDNA PBS regions hybridize to form a circular dsDNA intermediate. Strand displacement synthesis by RT to the PBS and PPT ends produces a blunt ended, linear dsDNA copy of the viral genome that includes long terminal repeats (LTRs) at both ends. Its function is as follows. Catalyzes viral DNA integration into the host chromosome, by performing a series of DNA cutting and joining reactions. This enzyme activity takes place after virion entry into a cell and reverse transcription of the RNA genome in dsDNA. The first step in the integration process is 3' processing. This step requires a complex comprising the viral genome, matrix protein, Vpr and integrase. This complex is called the pre-integration complex (PIC). The integrase protein removes 2 nucleotides from each 3' end of the viral DNA, leaving recessed CA OH's at the 3' ends. In the second step, the PIC enters cell nucleus. This process is mediated through integrase and Vpr proteins, and allows the virus to infect a non dividing cell. This ability to enter the nucleus is specific of lentiviruses, other retroviruses cannot and rely on cell division to access cell chromosomes. In the third step, termed strand transfer, the integrase protein joins the previously processed 3' ends to the 5' ends of strands of target cellular DNA at the site of integration. The 5'-ends are produced by integrase-catalyzed staggered cuts, 5 bp apart. A Y-shaped, gapped, recombination intermediate results, with the 5'-ends of the viral DNA strands and the 3' ends of target DNA strands remaining unjoined, flanking a gap of 5 bp. The last step is viral DNA integration into host chromosome. This involves host DNA repair synthesis in which the 5 bp gaps between the unjoined strands are filled in and then ligated. Since this process occurs at both cuts flanking the HIV genome, a 5 bp duplication of host DNA is produced at the ends of HIV-1 integration. Alternatively, Integrase may catalyze the excision of viral DNA just after strand transfer, this is termed disintegration. This chain is Gag-Pol polyprotein (gag-pol), found in Homo sapiens (Human).